We begin with the raw amino-acid sequence, 276 residues long: Orotidine 5'-phosphate decarboxylase (276 aa).

Substrate contacts are provided by residues Asp-40, 62-64 (KTH), 93-102 (DRKFIDIGNT), Tyr-228, and Arg-246. The active-site Proton donor is Lys-95.

It belongs to the OMP decarboxylase family.

The catalysed reaction is orotidine 5'-phosphate + H(+) = UMP + CO2. It functions in the pathway pyrimidine metabolism; UMP biosynthesis via de novo pathway; UMP from orotate: step 2/2. The polypeptide is Orotidine 5'-phosphate decarboxylase (pyrG) (Penicillium nalgiovense).